The primary structure comprises 214 residues: Calcineurin B homologous protein 3 (214 aa).

A lipid anchor (N-myristoyl glycine) is attached at Gly2. The region spanning 110–145 (FRKEKLKFLFHMYDADYDGIITLQEYKNVLDELMSG) is the EF-hand domain. Positions 123, 125, 127, and 134 each coordinate Ca(2+).

It belongs to the calcineurin regulatory subunit family. CHP subfamily. As to quaternary structure, monomer. Homodimer. In terms of tissue distribution, expressed in the bipotential gonad by E4.5 and expressed in both the testis and ovary by E5.5, but with expression higher in the testis. Expressed in the testis cords but also at low levels in the interstitium. In the ovary, expression is principally in the ovarian cortex, but also in the medulla. Also expressed in the embryonic brain, with expression highest in the region between the nasal placode and olfactory bulb. Also expressed in the embryonic heart and tail.

The protein localises to the nucleus. The protein resides in the cytoplasm. It localises to the membrane. It is found in the cell membrane. Its subcellular location is the cell projection. The protein localises to the lamellipodium. The protein resides in the ruffle membrane. Functionally, functions as an integral cofactor in cell pH regulation by controlling plasma membrane-type Na(+)/H(+) exchange activity. Promotes the induction of hematopoietic stem cell differentiation toward megakaryocytic lineage. Essential for the coupling of ERK cascade activation with the expression of ETS family genes in megakaryocytic differentiation. Also involved in granulocytic differentiation in a ERK-dependent manner. Inhibits the phosphatase activity of calcineurin. The chain is Calcineurin B homologous protein 3 from Gallus gallus (Chicken).